Consider the following 1096-residue polypeptide: Mediator of replication checkpoint protein 1 (1096 aa).

Basic and acidic residues predominate over residues 68–85; that stretch reads EGKKAPEQNHNNGKDRSE. Residues 68–90 form a disordered region; it reads EGKKAPEQNHNNGKDRSENSLPT. S144 carries the phosphoserine modification. Disordered regions lie at residues 166–200, 294–316, and 336–365; these read ALKT…IEPQ, IQSE…YKKP, and DDSS…LHEN. The segment covering 181–200 has biased composition (polar residues); the sequence is RIDSSGATSQTQPIKSIEPQ. The segment covering 294 to 315 has biased composition (basic and acidic residues); that stretch reads IQSELASEDSKREKARNVEYKK. Residues 336 to 346 are compositionally biased toward acidic residues; that stretch reads DDSSSNEDDDI. Phosphoserine is present on residues S409, S411, and S434. Residues 488-542 adopt a coiled-coil conformation; sequence QKEVIETKGLKLEDMAKEKEIVENLLEQEILRNKRIRQKEKRREKLEENDFQLNA. Residues 527–620 form a disordered region; sequence EKRREKLEEN…VEAKPKEKAD (94 aa). Residues 547 to 560 are compositionally biased toward low complexity; that stretch reads SDSGSESSGFALSG. Basic residues predominate over residues 591–600; sequence KQKKSHHVKH. Residues S605 and S607 each carry the phosphoserine modification. The residue at position 609 (T609) is a Phosphothreonine. Over residues 611–620 the composition is skewed to basic and acidic residues; it reads VEAKPKEKAD. Residues 652–716 are a coiled coil; sequence DTQNIEEVMA…IKELKKRGVT (65 aa). Residues 724–743 form a disordered region; the sequence is EESEDEWHGIGGADGEGSDD. Residues S801 and S807 each carry the phosphoserine modification. A compositionally biased stretch (polar residues) spans 881–898; it reads DTQDNSINVGDNTGNNEQ. The disordered stretch occupies residues 881–903; the sequence is DTQDNSINVGDNTGNNEQKPVDQ. At S911 the chain carries Phosphoserine. The segment at 1058-1096 is disordered; that stretch reads RKTEGSHRYHHDHHNKKMKMKTKTKSNKLFESGQDSFDN. The segment covering 1065–1083 has biased composition (basic residues); the sequence is RYHHDHHNKKMKMKTKTKS.

In terms of assembly, interacts with CDC45 in S phase. Post-translationally, phosphorylated by MEC1 and RAD53.

It localises to the nucleus. Required for normal DNA replication. Phosphorylated in response to DNA replication stress. Phosphorylation allows it to mediate the activation of RAD53. This chain is Mediator of replication checkpoint protein 1 (MRC1), found in Saccharomyces cerevisiae (strain ATCC 204508 / S288c) (Baker's yeast).